The following is a 256-amino-acid chain: NH(3)-dependent NAD(+) synthetase (256 aa).

Position 29-36 (Gly29–Ser36) interacts with ATP. Asp35 lines the Mg(2+) pocket. Deamido-NAD(+) is bound at residue Arg115. Thr135 is a binding site for ATP. Glu140 is a binding site for Mg(2+). 2 residues coordinate deamido-NAD(+): Lys148 and Asp155. Residues Lys164 and Ser186 each coordinate ATP. His245–Lys246 provides a ligand contact to deamido-NAD(+).

It belongs to the NAD synthetase family. In terms of assembly, homodimer.

It catalyses the reaction deamido-NAD(+) + NH4(+) + ATP = AMP + diphosphate + NAD(+) + H(+). It participates in cofactor biosynthesis; NAD(+) biosynthesis; NAD(+) from deamido-NAD(+) (ammonia route): step 1/1. In terms of biological role, catalyzes the ATP-dependent amidation of deamido-NAD to form NAD. Uses ammonia as a nitrogen source. This chain is NH(3)-dependent NAD(+) synthetase, found in Methanosarcina acetivorans (strain ATCC 35395 / DSM 2834 / JCM 12185 / C2A).